The chain runs to 180 residues: ATP-dependent protease subunit HslV (180 aa).

Thr-2 is a catalytic residue. Positions 157, 160, and 163 each coordinate Na(+).

Belongs to the peptidase T1B family. HslV subfamily. A double ring-shaped homohexamer of HslV is capped on each side by a ring-shaped HslU homohexamer. The assembly of the HslU/HslV complex is dependent on binding of ATP.

The protein resides in the cytoplasm. It carries out the reaction ATP-dependent cleavage of peptide bonds with broad specificity.. Allosterically activated by HslU binding. Functionally, protease subunit of a proteasome-like degradation complex believed to be a general protein degrading machinery. This is ATP-dependent protease subunit HslV from Wigglesworthia glossinidia brevipalpis.